Here is a 273-residue protein sequence, read N- to C-terminus: 2,3,4,5-tetrahydropyridine-2,6-dicarboxylate N-succinyltransferase (273 aa).

The substrate site is built by R104 and D141.

It belongs to the transferase hexapeptide repeat family. In terms of assembly, homotrimer.

It localises to the cytoplasm. It catalyses the reaction (S)-2,3,4,5-tetrahydrodipicolinate + succinyl-CoA + H2O = (S)-2-succinylamino-6-oxoheptanedioate + CoA. The protein operates within amino-acid biosynthesis; L-lysine biosynthesis via DAP pathway; LL-2,6-diaminopimelate from (S)-tetrahydrodipicolinate (succinylase route): step 1/3. This chain is 2,3,4,5-tetrahydropyridine-2,6-dicarboxylate N-succinyltransferase, found in Neisseria meningitidis serogroup A / serotype 4A (strain DSM 15465 / Z2491).